A 529-amino-acid polypeptide reads, in one-letter code: Bifunctional purine biosynthesis protein PurH (529 aa).

The region spanning 3 to 149 (DRIPLKRALI…KNHAFVTVVV (147 aa)) is the MGS-like domain.

Belongs to the PurH family.

The enzyme catalyses (6R)-10-formyltetrahydrofolate + 5-amino-1-(5-phospho-beta-D-ribosyl)imidazole-4-carboxamide = 5-formamido-1-(5-phospho-D-ribosyl)imidazole-4-carboxamide + (6S)-5,6,7,8-tetrahydrofolate. It carries out the reaction IMP + H2O = 5-formamido-1-(5-phospho-D-ribosyl)imidazole-4-carboxamide. The protein operates within purine metabolism; IMP biosynthesis via de novo pathway; 5-formamido-1-(5-phospho-D-ribosyl)imidazole-4-carboxamide from 5-amino-1-(5-phospho-D-ribosyl)imidazole-4-carboxamide (10-formyl THF route): step 1/1. It participates in purine metabolism; IMP biosynthesis via de novo pathway; IMP from 5-formamido-1-(5-phospho-D-ribosyl)imidazole-4-carboxamide: step 1/1. The sequence is that of Bifunctional purine biosynthesis protein PurH from Paracoccus denitrificans (strain Pd 1222).